The primary structure comprises 106 residues: CRISPR-associated endoribonuclease Cas2 (106 aa).

Mg(2+) is bound at residue aspartate 22.

Belongs to the CRISPR-associated endoribonuclease Cas2 protein family. Homodimer, forms a heterotetramer with a Cas1 homodimer. Requires Mg(2+) as cofactor.

Its function is as follows. CRISPR (clustered regularly interspaced short palindromic repeat), is an adaptive immune system that provides protection against mobile genetic elements (viruses, transposable elements and conjugative plasmids). CRISPR clusters contain sequences complementary to antecedent mobile elements and target invading nucleic acids. CRISPR clusters are transcribed and processed into CRISPR RNA (crRNA). Functions as a ssRNA-specific endoribonuclease. Involved in the integration of spacer DNA into the CRISPR cassette. This Fusobacterium nucleatum subsp. nucleatum (strain ATCC 25586 / DSM 15643 / BCRC 10681 / CIP 101130 / JCM 8532 / KCTC 2640 / LMG 13131 / VPI 4355) protein is CRISPR-associated endoribonuclease Cas2.